Consider the following 235-residue polypeptide: Phosphate-specific transport system accessory protein PhoU homolog 2 (235 aa).

The protein belongs to the PhoU family. In terms of assembly, homodimer.

It localises to the cytoplasm. In terms of biological role, plays a role in the regulation of phosphate uptake. This is Phosphate-specific transport system accessory protein PhoU homolog 2 (phoU2) from Thermotoga maritima (strain ATCC 43589 / DSM 3109 / JCM 10099 / NBRC 100826 / MSB8).